A 420-amino-acid chain; its full sequence is Heterogeneous nuclear ribonucleoprotein D-like (420 aa).

Disordered regions lie at residues 1-83 and 96-120; these read MEVP…RRRP and QRSA…SVTM. Omega-N-methylarginine is present on Arg25. The span at 36–52 shows a compositional bias: low complexity; sequence RQLAPLLPSLAPSSARQ. RRM domains are found at residues 148-230 and 233-312; these read GKMF…KGKE and KKVF…QPKE. At Lys161 the chain carries N6-methyllysine. Residue Lys209 forms a Glycyl lysine isopeptide (Lys-Gly) (interchain with G-Cter in SUMO2) linkage. Residue Lys216 is modified to N6-acetyllysine. Phosphoserine is present on Ser241. Disordered regions lie at residues 313-348 and 398-420; these read VYRQ…NWNQ and GQQS…YQPY. Over residues 323–342 the composition is skewed to gly residues; the sequence is GGRGAAAGGRGGTRGRGRGQ. The segment at 342–420 is necessary for interaction with TNPO1; that stretch reads QGQNWNQGFN…GNHQNNYQPY (79 aa). The segment at 396–420 is necessary for its nuclear import and export; it reads YSGQQSTYGKASRGGGNHQNNYQPY. Arg408 is modified (dimethylated arginine; alternate). Arg408 carries the omega-N-methylarginine; alternate modification.

Interacts with ZNF148. Interacts with TNPO1. In terms of processing, dimethylation of Arg-408 is probably of the asymmetric type. As to expression, expressed in heart, brain, placenta, lung, liver, skeletal muscle, kidney, pancreas, spleen, thymus, prostate, testis, ovary, small intestine, colon and leukocytes. Expressed in myeloid leukemia, gastric adenocarcinoma, cervical carcinoma, hepatoma, fibrosarcoma, colon adenocarcinoma, epidermoid carcinoma, osteosarcoma and urinary bladder carcinoma cells.

It is found in the nucleus. The protein localises to the cytoplasm. Its function is as follows. Acts as a transcriptional regulator. Promotes transcription repression. Promotes transcription activation in differentiated myotubes. Binds to double- and single-stranded DNA sequences. Binds to the transcription suppressor CATR sequence of the COX5B promoter. Binds with high affinity to RNA molecules that contain AU-rich elements (AREs) found within the 3'-UTR of many proto-oncogenes and cytokine mRNAs. Binds both to nuclear and cytoplasmic poly(A) mRNAs. Binds to poly(G) and poly(A), but not to poly(U) or poly(C) RNA homopolymers. Binds to the 5'-ACUAGC-3' RNA consensus sequence. The sequence is that of Heterogeneous nuclear ribonucleoprotein D-like (HNRNPDL) from Homo sapiens (Human).